We begin with the raw amino-acid sequence, 228 residues long: Octanoyltransferase (228 aa).

The BPL/LPL catalytic domain maps to 30 to 213 (NKVEDIMLLL…YFSRVFDFEP (184 aa)). Residues 75-82 (RGGDVTYH), 143-145 (AIG), and 156-158 (GFA) each bind substrate. Cys-174 functions as the Acyl-thioester intermediate in the catalytic mechanism.

This sequence belongs to the LipB family.

It localises to the cytoplasm. It carries out the reaction octanoyl-[ACP] + L-lysyl-[protein] = N(6)-octanoyl-L-lysyl-[protein] + holo-[ACP] + H(+). The protein operates within protein modification; protein lipoylation via endogenous pathway; protein N(6)-(lipoyl)lysine from octanoyl-[acyl-carrier-protein]: step 1/2. Its function is as follows. Catalyzes the transfer of endogenously produced octanoic acid from octanoyl-acyl-carrier-protein onto the lipoyl domains of lipoate-dependent enzymes. Lipoyl-ACP can also act as a substrate although octanoyl-ACP is likely to be the physiological substrate. The polypeptide is Octanoyltransferase (Desulforamulus reducens (strain ATCC BAA-1160 / DSM 100696 / MI-1) (Desulfotomaculum reducens)).